The sequence spans 162 residues: Caveolin-2 (162 aa).

At 1-86 (MGLETEKADV…FEISKYVLYK (86 aa)) the chain is on the cytoplasmic side. Tyr-19 bears the Phosphotyrosine; by SRC mark. 2 positions are modified to phosphoserine: Ser-20 and Ser-23. The residue at position 27 (Tyr-27) is a Phosphotyrosine; by SRC. Phosphoserine is present on Ser-36. The helical intramembrane region spans 87 to 107 (FLTVFLAIPLAFVAGILFATL). The Cytoplasmic segment spans residues 108–162 (SCLHIWIIMPFVKTCLMVLPSVQTIWKSVTDVIIAPLCTSVGRSFSSISLRLSQD).

Belongs to the caveolin family. In terms of assembly, monomer or homodimer. Interacts with CAV1; the interaction forms a stable heterooligomeric complex that is required for targeting to lipid rafts and for caveolae formation. Tyrosine phosphorylated forms do not form heterooligomers with the Tyr-19-phosphorylated form existing as a monomer or dimer, and the Tyr-27-form as a monomer only. Interacts (tyrosine phosphorylated form) with the SH2 domain-containing proteins, RASA1, NCK1 and SRC. Interacts (tyrosine phosphorylated form) with INSR, the interaction (Tyr-27-phosphorylated form) is increased on insulin stimulation. Interacts (Tyr-19 phosphorylated form) with MAPK1 (phosphorylated form); the interaction, promoted by insulin, leads to nuclear location and MAPK1 activation. Interacts with STAT3; the interaction is increased on insulin-induced tyrosine phosphorylation leading to STAT activation. Phosphorylated on serine and tyrosine residues. CAV1 promotes phosphorylation on Ser-23 which then targets the complex to the plasma membrane, lipid rafts and caveolae. Phosphorylation on Ser-36 appears to modulate mitosis in endothelial cells. Phosphorylation on both Tyr-19 and Tyr-27 is required for insulin-induced 'Ser-727' phosphorylation of STAT3 and its activation. Phosphorylation on Tyr-19 is required for insulin-induced phosphorylation of MAPK1 and DNA binding of STAT3. Tyrosine phosphorylation is induced by both EGF and insulin (By. similarity).

It localises to the nucleus. Its subcellular location is the cytoplasm. The protein resides in the golgi apparatus membrane. It is found in the cell membrane. The protein localises to the membrane. It localises to the caveola. In terms of biological role, may act as a scaffolding protein within caveolar membranes. Interacts directly with G-protein alpha subunits and can functionally regulate their activity. Acts as an accessory protein in conjunction with CAV1 in targeting to lipid rafts and driving caveolae formation. The Ser-36 phosphorylated form has a role in modulating mitosis in endothelial cells. Positive regulator of cellular mitogenesis of the MAPK signaling pathway. Required for the insulin-stimulated nuclear translocation and activation of MAPK1 and STAT3, and the subsequent regulation of cell cycle progression. This is Caveolin-2 (CAV2) from Otolemur garnettii (Small-eared galago).